Reading from the N-terminus, the 66-residue chain is Transmembrane protein B66L (66 aa).

Residues 1–20 (MDIKRALILFLLFLVVLSNA) form the signal peptide. The Extracellular portion of the chain corresponds to 21–40 (FVDYIISNFNHAVTCRKPTY). A helical transmembrane segment spans residues 41 to 61 (FGIVLQGIFLVILFSIVDYLI). Topologically, residues 62-66 (NENIL) are cytoplasmic.

It belongs to the asfivirus B66L family.

The protein resides in the host membrane. This Ornithodoros (relapsing fever ticks) protein is Transmembrane protein B66L.